Consider the following 132-residue polypeptide: Small ribosomal subunit protein uS8 (132 aa).

Belongs to the universal ribosomal protein uS8 family. As to quaternary structure, part of the 30S ribosomal subunit. Contacts proteins S5 and S12.

Functionally, one of the primary rRNA binding proteins, it binds directly to 16S rRNA central domain where it helps coordinate assembly of the platform of the 30S subunit. In Syntrophobacter fumaroxidans (strain DSM 10017 / MPOB), this protein is Small ribosomal subunit protein uS8.